Consider the following 88-residue polypeptide: Large ribosomal subunit protein bL27 (88 aa).

The interval 1–25 is disordered; that stretch reads MAHKKGASSSSNGRDSEAKRLGVKR.

Belongs to the bacterial ribosomal protein bL27 family.

In Corynebacterium diphtheriae (strain ATCC 700971 / NCTC 13129 / Biotype gravis), this protein is Large ribosomal subunit protein bL27.